The primary structure comprises 523 residues: Sensory neuron membrane protein 1 (523 aa).

Residues 1–11 (MQLPRELKYAA) lie on the Cytoplasmic side of the membrane. A helical transmembrane segment spans residues 12 to 32 (IAGGVALFGLIFGWVLFPTIL). Over 33–458 (KSQLKKEMAL…HQLFIPKRVV (426 aa)) the chain is Extracellular. N-linked (GlcNAc...) asparagine glycans are attached at residues Asn-67 and Asn-229. 3 cysteine pairs are disulfide-bonded: Cys-268/Cys-333, Cys-297/Cys-352, and Cys-335/Cys-341. N-linked (GlcNAc...) asparagine glycosylation is present at Asn-440. A helical transmembrane segment spans residues 459-479 (GVLRWWMVSFGSLGAVIGIVF). The Cytoplasmic segment spans residues 480–523 (HFRDHIMRLAVSGDTKVSKVTPEEEEQKDISVIGQAQEPAKVNI).

The protein belongs to the CD36 family.

Its subcellular location is the cell membrane. Its function is as follows. Plays an olfactory role that is not restricted to pheromone sensitivity. The protein is Sensory neuron membrane protein 1 of Helicoverpa armigera (Cotton bollworm).